The following is a 380-amino-acid chain: Cytochrome b (380 aa).

4 consecutive transmembrane segments (helical) span residues 34–54 (FGSL…LLAM), 78–99 (WLIR…YFHI), 114–134 (WNTG…GYVL), and 179–199 (FFAL…IHLT). H84 and H98 together coordinate heme b. The heme b site is built by H183 and H197. H202 contributes to the a ubiquinone binding site. A run of 4 helical transmembrane segments spans residues 227–247 (LKDI…ALFS), 289–309 (LGGV…PFLH), 321–341 (ISQL…WVGS), and 348–368 (FIII…VLFP).

The protein belongs to the cytochrome b family. In terms of assembly, the cytochrome bc1 complex contains 11 subunits: 3 respiratory subunits (MT-CYB, CYC1 and UQCRFS1), 2 core proteins (UQCRC1 and UQCRC2) and 6 low-molecular weight proteins (UQCRH/QCR6, UQCRB/QCR7, UQCRQ/QCR8, UQCR10/QCR9, UQCR11/QCR10 and a cleavage product of UQCRFS1). This cytochrome bc1 complex then forms a dimer. Heme b serves as cofactor.

Its subcellular location is the mitochondrion inner membrane. In terms of biological role, component of the ubiquinol-cytochrome c reductase complex (complex III or cytochrome b-c1 complex) that is part of the mitochondrial respiratory chain. The b-c1 complex mediates electron transfer from ubiquinol to cytochrome c. Contributes to the generation of a proton gradient across the mitochondrial membrane that is then used for ATP synthesis. In Pachyptila salvini (Salvin's prion), this protein is Cytochrome b (MT-CYB).